The chain runs to 599 residues: Putative sensor histidine kinase NtrY-like (599 aa).

The next 4 membrane-spanning stretches (helical) occupy residues 17–37 (VLIF…FYVI), 44–64 (FSTI…LGVL), 85–105 (IVIA…VFSV), and 285–305 (IMFI…GVIF). One can recognise an HAMP domain in the interval 307–361 (AKIVKPIKKLVTATDKVKDGDLTVQVPENEVDKDEIGTLYAAFNRMIKQLSRQQR). Positions 378 to 589 (KVAHEIKNPL…IIDIKFDLKK (212 aa)) constitute a Histidine kinase domain. His381 is modified (phosphohistidine; by autocatalysis).

It localises to the cell membrane. It carries out the reaction ATP + protein L-histidine = ADP + protein N-phospho-L-histidine.. Functionally, member of the two-component regulatory system RF_0427/RF_0895. The polypeptide is Putative sensor histidine kinase NtrY-like (Rickettsia felis (strain ATCC VR-1525 / URRWXCal2) (Rickettsia azadi)).